We begin with the raw amino-acid sequence, 151 residues long: FAD synthase (151 aa).

Residues 12-13 (TF), 17-20 (HPGH), D97, and Y125 each bind ATP.

It belongs to the archaeal FAD synthase family. In terms of assembly, homodimer. A divalent metal cation serves as cofactor.

It carries out the reaction FMN + ATP + H(+) = FAD + diphosphate. It functions in the pathway cofactor biosynthesis; FAD biosynthesis; FAD from FMN: step 1/1. In terms of biological role, catalyzes the transfer of the AMP portion of ATP to flavin mononucleotide (FMN) to produce flavin adenine dinucleotide (FAD) coenzyme. The chain is FAD synthase from Methanococcus vannielii (strain ATCC 35089 / DSM 1224 / JCM 13029 / OCM 148 / SB).